The sequence spans 437 residues: Serine carboxypeptidase-like 9 (437 aa).

The signal sequence occupies residues 1–21 (MSLILKFMLLILLVSSHHVRS). Residue N101 is glycosylated (N-linked (GlcNAc...) asparagine). The active site involves S175. 2 disulfide bridges follow: C243–C257 and C281–C293. N307 and N346 each carry an N-linked (GlcNAc...) asparagine glycan. D362 is an active-site residue. N378 carries N-linked (GlcNAc...) asparagine glycosylation. Residue H415 is part of the active site.

The protein belongs to the peptidase S10 family. In terms of tissue distribution, expressed in seedlings, leaves, flowers and siliques.

Its subcellular location is the secreted. It carries out the reaction 2 1-O-(trans-sinapoyl)-beta-D-glucose = 1,2-di-O-sinapoyl beta-D-glucose + D-glucose. In terms of biological role, catalyzes the formation of 1,2-bis-O-sinapoyl beta-D-glucoside and an unidentified compound 1. This Arabidopsis thaliana (Mouse-ear cress) protein is Serine carboxypeptidase-like 9 (SCPL9).